We begin with the raw amino-acid sequence, 371 residues long: MALETFVNSEPFTFGVELEIQIVNTHNYDLTKAASDLMRLIKDAKFPGNITPEITESMIELSTGICRTHDQALGELHAIRDTLVSAADQLNVGLCGGGTHAFQQWSERQIFDAPRFQYISELYGYLAKQFTVFGQHVHIGCPDADSALFLLHSMSRFIPHFIALSASSPYVQNVDTGFHSARLNSVFAFPLSGRAPFVLTWHGFEEYFTKMVNTGVVNSMKDFYWDIRPKPGYGTIEVRVMDTPLSVDRAAAIACYIQTLARYLLIDRPLKLSEDDYLVYTFNRFEACRFGLEGTCVNPQTGERRTIAEDILDTLDRIAPHAAALGSRAALDEIGALAKARVNDASWLRTIFKQEKSLNETVRQQCLRWRE.

It belongs to the glutamate--cysteine ligase type 2 family. YbdK subfamily.

The catalysed reaction is L-cysteine + L-glutamate + ATP = gamma-L-glutamyl-L-cysteine + ADP + phosphate + H(+). In terms of biological role, ATP-dependent carboxylate-amine ligase which exhibits weak glutamate--cysteine ligase activity. The protein is Putative glutamate--cysteine ligase 2 of Burkholderia mallei (strain NCTC 10247).